We begin with the raw amino-acid sequence, 929 residues long: MSGRDNRAAGAGGGSGGGGGGGGGGGNHHHHHQPLSNAMGKLKEKLTRAGEELGYHRVESNLSASNTATSLDTILPEDPFPFPQAAPQRHPQQQFPFLQQQPQQQQQPQQQQQPQQQQQLQQHHTQHTQYQQQQQQQQPLRLLHDIDDEQPLSFRPLLEDDDIHEPPQEIQQQQLQQQRGNLRASGSLELTPLPPPPTSLEPHRDRQQRSVVNEELQRSKQSLKGSRVSFERAPQQSNSNNNSKNNSKTTVAADASDDDSFEDRRVGYQQQKATSVDHKGILKDLRHILASDNRRQFQAKKHVSLDIKGTPFLQDLLKDSSSEEEFHKTRREFQGRKHQSLDPRVTFKLDKVLHGSSTDSDEEGEDAEHKRLIHRPKDITKPVIIDLKDLESESDEDFLSSRQNFQQQRSISTDSRKSRRLYEMDEMGNKRGENIRHAVPFVRQITEDGKPKLEVYRPTTNPIYIWTQVLAALSVSLGSLVVGFSSAYTSPALVSMTDRNLTSFDVSTEDASWVGGIMPLAGLAGGIAGGPLIEYLGRRNTILATAVPFIISWLLIACAVNVPMVLSGRFLAGFCVGIASLSLPVYLGETVQPEVRGTLGLLPTAFGNIGILLCFIAGTYMDWSMLAFLGGALPVPFLILMFLIPETPRWYVSRGREERARKALVWLRGVEADVEPELKGLMRSQADADRQATHNTMLELLKRSNLKPLSISLGLMFFQQLSGINAVIFYTVQIFKDAGSTLDGNVCTIIVGTVNFIATFIGILLIDRAGRKILLYVSNIAMILTLFVLGGFFYCKANGMDVSNVGLLPLCCFVVYILGFSLGFGPIPWLMMGEILPAKIRGSAASVATAFNWTCTFVVTKSFLDMIKLIGAHGAFWLFGVICCIGMFFVIFCVPETQGKTLEDIERKMMGRVRRMSSVANIKPLSFNM.

The disordered stretch occupies residues 1-275 (MSGRDNRAAG…VGYQQQKATS (275 aa)). Over 1–462 (MSGRDNRAAG…LEVYRPTTNP (462 aa)) the chain is Cytoplasmic. Over residues 10-26 (GAGGGSGGGGGGGGGGG) the composition is skewed to gly residues. The segment covering 41–59 (KLKEKLTRAGEELGYHRVE) has biased composition (basic and acidic residues). Polar residues predominate over residues 60 to 72 (SNLSASNTATSLD). Low complexity-rich tracts occupy residues 85–141 (AAPQ…QPLR), 168–178 (QEIQQQQLQQQ), and 237–254 (SNSN…VAAD). Phosphoserine is present on residues Ser-320, Ser-321, and Ser-322. The disordered stretch occupies residues 352–371 (VLHGSSTDSDEEGEDAEHKR). 2 positions are modified to phosphoserine: Ser-392 and Ser-394. The segment at 398–420 (FLSSRQNFQQQRSISTDSRKSRR) is disordered. The span at 402 to 413 (RQNFQQQRSIST) shows a compositional bias: polar residues. Residues 463–483 (IYIWTQVLAALSVSLGSLVVG) form a helical membrane-spanning segment. At 484–512 (FSSAYTSPALVSMTDRNLTSFDVSTEDAS) the chain is on the extracellular side. An N-linked (GlcNAc...) asparagine glycan is attached at Asn-500. The chain crosses the membrane as a helical span at residues 513–533 (WVGGIMPLAGLAGGIAGGPLI). The Cytoplasmic portion of the chain corresponds to 534–541 (EYLGRRNT). The helical transmembrane segment at 542 to 562 (ILATAVPFIISWLLIACAVNV) threads the bilayer. Topologically, residues 563 to 569 (PMVLSGR) are extracellular. Residues 570 to 590 (FLAGFCVGIASLSLPVYLGET) traverse the membrane as a helical segment. Residues 591 to 596 (VQPEVR) are Cytoplasmic-facing. The chain crosses the membrane as a helical span at residues 597–617 (GTLGLLPTAFGNIGILLCFIA). Topologically, residues 618–624 (GTYMDWS) are extracellular. The chain crosses the membrane as a helical span at residues 625–645 (MLAFLGGALPVPFLILMFLIP). Residues 646–708 (ETPRWYVSRG…ELLKRSNLKP (63 aa)) are Cytoplasmic-facing. The helical transmembrane segment at 709 to 729 (LSISLGLMFFQQLSGINAVIF) threads the bilayer. Residues 730-745 (YTVQIFKDAGSTLDGN) are Extracellular-facing. Residues 746 to 766 (VCTIIVGTVNFIATFIGILLI) traverse the membrane as a helical segment. The Cytoplasmic portion of the chain corresponds to 767–772 (DRAGRK). A helical transmembrane segment spans residues 773–793 (ILLYVSNIAMILTLFVLGGFF). Residues 794-804 (YCKANGMDVSN) are Extracellular-facing. Residues 805 to 825 (VGLLPLCCFVVYILGFSLGFG) traverse the membrane as a helical segment. Over 826–839 (PIPWLMMGEILPAK) the chain is Cytoplasmic. A helical membrane pass occupies residues 840–860 (IRGSAASVATAFNWTCTFVVT). The Extracellular portion of the chain corresponds to 861-873 (KSFLDMIKLIGAH). The chain crosses the membrane as a helical span at residues 874–894 (GAFWLFGVICCIGMFFVIFCV). Over 895–929 (PETQGKTLEDIERKMMGRVRRMSSVANIKPLSFNM) the chain is Cytoplasmic. Phosphoserine is present on residues Ser-917 and Ser-918.

The protein belongs to the major facilitator superfamily. Sugar transporter (TC 2.A.1.1) family. Trehalose transporter subfamily.

It localises to the cell membrane. In terms of biological role, low-capacity facilitative transporter for trehalose. Does not transport maltose, sucrose or lactose. Mediates the bidirectional transfer of trehalose. Responsible for the transport of trehalose synthesized in the fat body and the incorporation of trehalose into other tissues that require a carbon source, thereby regulating trehalose levels in the hemolymph. In Drosophila grimshawi (Hawaiian fruit fly), this protein is Facilitated trehalose transporter Tret1.